Consider the following 351-residue polypeptide: UDP-3-O-acylglucosamine N-acyltransferase (351 aa).

Catalysis depends on His240, which acts as the Proton acceptor.

The protein belongs to the transferase hexapeptide repeat family. LpxD subfamily. Homotrimer.

It carries out the reaction a UDP-3-O-[(3R)-3-hydroxyacyl]-alpha-D-glucosamine + a (3R)-hydroxyacyl-[ACP] = a UDP-2-N,3-O-bis[(3R)-3-hydroxyacyl]-alpha-D-glucosamine + holo-[ACP] + H(+). It functions in the pathway bacterial outer membrane biogenesis; LPS lipid A biosynthesis. In terms of biological role, catalyzes the N-acylation of UDP-3-O-acylglucosamine using 3-hydroxyacyl-ACP as the acyl donor. Is involved in the biosynthesis of lipid A, a phosphorylated glycolipid that anchors the lipopolysaccharide to the outer membrane of the cell. The polypeptide is UDP-3-O-acylglucosamine N-acyltransferase (Pseudomonas syringae pv. syringae (strain B728a)).